We begin with the raw amino-acid sequence, 190 residues long: Bifunctional protein PyrR (190 aa).

The PRPP-binding motif lies at Val112–Ser124.

Belongs to the purine/pyrimidine phosphoribosyltransferase family. PyrR subfamily.

It catalyses the reaction UMP + diphosphate = 5-phospho-alpha-D-ribose 1-diphosphate + uracil. In terms of biological role, regulates the transcription of the pyrimidine nucleotide (pyr) operon in response to exogenous pyrimidines. Functionally, also displays a weak uracil phosphoribosyltransferase activity which is not physiologically significant. This is Bifunctional protein PyrR from Mycolicibacterium paratuberculosis (strain ATCC BAA-968 / K-10) (Mycobacterium paratuberculosis).